We begin with the raw amino-acid sequence, 346 residues long: Methylthioribose-1-phosphate isomerase 1 (346 aa).

Substrate is bound by residues 48 to 50, Arg91, and Gln196; that span reads RGA. Residue Asp237 is the Proton donor of the active site. A substrate-binding site is contributed by 247-248; it reads NK.

The protein belongs to the eIF-2B alpha/beta/delta subunits family. MtnA subfamily.

It catalyses the reaction 5-(methylsulfanyl)-alpha-D-ribose 1-phosphate = 5-(methylsulfanyl)-D-ribulose 1-phosphate. It functions in the pathway amino-acid biosynthesis; L-methionine biosynthesis via salvage pathway; L-methionine from S-methyl-5-thio-alpha-D-ribose 1-phosphate: step 1/6. Catalyzes the interconversion of methylthioribose-1-phosphate (MTR-1-P) into methylthioribulose-1-phosphate (MTRu-1-P). This is Methylthioribose-1-phosphate isomerase 1 from Pseudothermotoga lettingae (strain ATCC BAA-301 / DSM 14385 / NBRC 107922 / TMO) (Thermotoga lettingae).